The chain runs to 124 residues: Small ribosomal subunit protein uS12 (124 aa).

A 3-methylthioaspartic acid modification is found at D89. A disordered region spans residues 104–124 (TAGVKDRRQSRSKYGAKAPKE).

It belongs to the universal ribosomal protein uS12 family. In terms of assembly, part of the 30S ribosomal subunit. Contacts proteins S8 and S17. May interact with IF1 in the 30S initiation complex.

With S4 and S5 plays an important role in translational accuracy. Its function is as follows. Interacts with and stabilizes bases of the 16S rRNA that are involved in tRNA selection in the A site and with the mRNA backbone. Located at the interface of the 30S and 50S subunits, it traverses the body of the 30S subunit contacting proteins on the other side and probably holding the rRNA structure together. The combined cluster of proteins S8, S12 and S17 appears to hold together the shoulder and platform of the 30S subunit. This is Small ribosomal subunit protein uS12 from Synechococcus sp. (strain CC9605).